The sequence spans 319 residues: Beta-ketoacyl-[acyl-carrier-protein] synthase III (319 aa).

Catalysis depends on residues cysteine 115 and histidine 246. Positions 247–251 (QANLR) are ACP-binding. Residue asparagine 276 is part of the active site.

The protein belongs to the thiolase-like superfamily. FabH family. In terms of assembly, homodimer.

It localises to the cytoplasm. The enzyme catalyses malonyl-[ACP] + acetyl-CoA + H(+) = 3-oxobutanoyl-[ACP] + CO2 + CoA. It functions in the pathway lipid metabolism; fatty acid biosynthesis. Catalyzes the condensation reaction of fatty acid synthesis by the addition to an acyl acceptor of two carbons from malonyl-ACP. Catalyzes the first condensation reaction which initiates fatty acid synthesis and may therefore play a role in governing the total rate of fatty acid production. Possesses both acetoacetyl-ACP synthase and acetyl transacylase activities. Its substrate specificity determines the biosynthesis of branched-chain and/or straight-chain of fatty acids. In Coxiella burnetii (strain RSA 493 / Nine Mile phase I), this protein is Beta-ketoacyl-[acyl-carrier-protein] synthase III.